A 277-amino-acid chain; its full sequence is Phosphatidylglycerol--prolipoprotein diacylglyceryl transferase (277 aa).

4 helical membrane-spanning segments follow: residues 15–35 (IHVRWYGIIIACGILLATFMS), 50–70 (IDLLLWGVPIGFIGARIYYVI), 89–109 (GGIAIYGGLIAGAIVLLVFCY), and 112–132 (FLPPFLVLDIVAPGVMAAQVL). R134 serves as a coordination point for a 1,2-diacyl-sn-glycero-3-phospho-(1'-sn-glycerol). A run of 3 helical transmembrane segments spans residues 174-194 (KPTFLYESFFNLIGLIIILSL), 204-224 (GEVFMLYLAWYSVVRFFVEGM), and 234-254 (VIRVSQALSLLLLIAVVILFV).

This sequence belongs to the Lgt family.

It localises to the cell membrane. The catalysed reaction is L-cysteinyl-[prolipoprotein] + a 1,2-diacyl-sn-glycero-3-phospho-(1'-sn-glycerol) = an S-1,2-diacyl-sn-glyceryl-L-cysteinyl-[prolipoprotein] + sn-glycerol 1-phosphate + H(+). The protein operates within protein modification; lipoprotein biosynthesis (diacylglyceryl transfer). Its function is as follows. Catalyzes the transfer of the diacylglyceryl group from phosphatidylglycerol to the sulfhydryl group of the N-terminal cysteine of a prolipoprotein, the first step in the formation of mature lipoproteins. In Lactobacillus delbrueckii subsp. bulgaricus (strain ATCC 11842 / DSM 20081 / BCRC 10696 / JCM 1002 / NBRC 13953 / NCIMB 11778 / NCTC 12712 / WDCM 00102 / Lb 14), this protein is Phosphatidylglycerol--prolipoprotein diacylglyceryl transferase.